The chain runs to 173 residues: Dual-action ribosomal maturation protein DarP (173 aa).

Belongs to the DarP family.

The protein localises to the cytoplasm. Member of a network of 50S ribosomal subunit biogenesis factors which assembles along the 30S-50S interface, preventing incorrect 23S rRNA structures from forming. Promotes peptidyl transferase center (PTC) maturation. The polypeptide is Dual-action ribosomal maturation protein DarP (Pseudomonas putida (strain W619)).